Here is a 290-residue protein sequence, read N- to C-terminus: Ribosomal RNA small subunit methyltransferase A (290 aa).

N27, L29, G54, E75, D100, and N125 together coordinate S-adenosyl-L-methionine.

Belongs to the class I-like SAM-binding methyltransferase superfamily. rRNA adenine N(6)-methyltransferase family. RsmA subfamily.

The protein localises to the cytoplasm. It catalyses the reaction adenosine(1518)/adenosine(1519) in 16S rRNA + 4 S-adenosyl-L-methionine = N(6)-dimethyladenosine(1518)/N(6)-dimethyladenosine(1519) in 16S rRNA + 4 S-adenosyl-L-homocysteine + 4 H(+). In terms of biological role, specifically dimethylates two adjacent adenosines (A1518 and A1519) in the loop of a conserved hairpin near the 3'-end of 16S rRNA in the 30S particle. May play a critical role in biogenesis of 30S subunits. The polypeptide is Ribosomal RNA small subunit methyltransferase A (Streptococcus thermophilus (strain CNRZ 1066)).